The following is a 132-amino-acid chain: Small ribosomal subunit protein uS8 (132 aa).

This sequence belongs to the universal ribosomal protein uS8 family. As to quaternary structure, part of the 30S ribosomal subunit. Contacts proteins S5 and S12.

Functionally, one of the primary rRNA binding proteins, it binds directly to 16S rRNA central domain where it helps coordinate assembly of the platform of the 30S subunit. The sequence is that of Small ribosomal subunit protein uS8 from Borrelia garinii subsp. bavariensis (strain ATCC BAA-2496 / DSM 23469 / PBi) (Borreliella bavariensis).